A 211-amino-acid chain; its full sequence is Probable GTP-binding protein EngB (211 aa).

The 175-residue stretch at 30-204 (EGFEVAFAGR…YTVLAGWMEL (175 aa)) folds into the EngB-type G domain. Residues 38–45 (GRSNAGKS), 64–68 (GRTQL), 82–85 (DLPG), 149–152 (TKAD), and 182–185 (LFSA) each bind GTP. Mg(2+)-binding residues include serine 45 and threonine 66.

The protein belongs to the TRAFAC class TrmE-Era-EngA-EngB-Septin-like GTPase superfamily. EngB GTPase family. It depends on Mg(2+) as a cofactor.

In terms of biological role, necessary for normal cell division and for the maintenance of normal septation. The polypeptide is Probable GTP-binding protein EngB (Pseudomonas syringae pv. tomato (strain ATCC BAA-871 / DC3000)).